The chain runs to 451 residues: 23S rRNA (uracil(1939)-C(5))-methyltransferase RlmD (451 aa).

Positions 20-78 constitute a TRAM domain; it reads QIPAGKKQRLTIERLSDDGRGIAFLEGKTWFVAGSLAGEEVEARVLNARGKVVEARTER. C91, C97, C100, and C179 together coordinate [4Fe-4S] cluster. Positions 283, 312, 317, 333, 360, and 381 each coordinate S-adenosyl-L-methionine. C407 functions as the Nucleophile in the catalytic mechanism.

Belongs to the class I-like SAM-binding methyltransferase superfamily. RNA M5U methyltransferase family. RlmD subfamily.

The catalysed reaction is uridine(1939) in 23S rRNA + S-adenosyl-L-methionine = 5-methyluridine(1939) in 23S rRNA + S-adenosyl-L-homocysteine + H(+). In terms of biological role, catalyzes the formation of 5-methyl-uridine at position 1939 (m5U1939) in 23S rRNA. The sequence is that of 23S rRNA (uracil(1939)-C(5))-methyltransferase RlmD from Pseudomonas savastanoi pv. phaseolicola (strain 1448A / Race 6) (Pseudomonas syringae pv. phaseolicola (strain 1448A / Race 6)).